The sequence spans 367 residues: tRNA-specific 2-thiouridylase MnmA (367 aa).

ATP is bound by residues 13–20 (GLSGGVDS) and methionine 39. The interaction with target base in tRNA stretch occupies residues 99-101 (NPD). The Nucleophile role is filled by cysteine 104. Residues cysteine 104 and cysteine 200 are joined by a disulfide bond. Glycine 128 is a binding site for ATP. The interval 150-152 (KDQ) is interaction with tRNA. The active-site Cysteine persulfide intermediate is the cysteine 200. An interaction with tRNA region spans residues 307 to 308 (RY).

It belongs to the MnmA/TRMU family.

Its subcellular location is the cytoplasm. It catalyses the reaction S-sulfanyl-L-cysteinyl-[protein] + uridine(34) in tRNA + AH2 + ATP = 2-thiouridine(34) in tRNA + L-cysteinyl-[protein] + A + AMP + diphosphate + H(+). In terms of biological role, catalyzes the 2-thiolation of uridine at the wobble position (U34) of tRNA, leading to the formation of s(2)U34. The protein is tRNA-specific 2-thiouridylase MnmA of Neisseria meningitidis serogroup A / serotype 4A (strain DSM 15465 / Z2491).